The primary structure comprises 131 residues: MVRNPNLSKEEERLLKLREELKRKKPKFRRQEWHRYKKLGEKWRRPKGRHSKMRRKLKSKPKMPNPGYGSPKKVRGLHPSGYEEVLVYNPKDLEKIDPKRQAARIASRVGRRKRQEILEKAEELGIVVLNA.

The interval 39–77 is disordered; that stretch reads LGEKWRRPKGRHSKMRRKLKSKPKMPNPGYGSPKKVRGL. The span at 44 to 61 shows a compositional bias: basic residues; sequence RRPKGRHSKMRRKLKSKP.

The protein belongs to the eukaryotic ribosomal protein eL32 family.

This chain is Large ribosomal subunit protein eL32 (rpl32), found in Methanopyrus kandleri (strain AV19 / DSM 6324 / JCM 9639 / NBRC 100938).